We begin with the raw amino-acid sequence, 303 residues long: Sulfate adenylyltransferase subunit 2 (303 aa).

The protein belongs to the PAPS reductase family. CysD subfamily. Heterodimer composed of CysD, the smaller subunit, and CysN.

It catalyses the reaction sulfate + ATP + H(+) = adenosine 5'-phosphosulfate + diphosphate. It functions in the pathway sulfur metabolism; hydrogen sulfide biosynthesis; sulfite from sulfate: step 1/3. Functionally, with CysN forms the ATP sulfurylase (ATPS) that catalyzes the adenylation of sulfate producing adenosine 5'-phosphosulfate (APS) and diphosphate, the first enzymatic step in sulfur assimilation pathway. APS synthesis involves the formation of a high-energy phosphoric-sulfuric acid anhydride bond driven by GTP hydrolysis by CysN coupled to ATP hydrolysis by CysD. This Akkermansia muciniphila (strain ATCC BAA-835 / DSM 22959 / JCM 33894 / BCRC 81048 / CCUG 64013 / CIP 107961 / Muc) protein is Sulfate adenylyltransferase subunit 2.